Here is a 212-residue protein sequence, read N- to C-terminus: Pyrrolidone-carboxylate peptidase (212 aa).

Active-site residues include E80, C143, and H165.

The protein belongs to the peptidase C15 family. As to quaternary structure, homotetramer.

It is found in the cytoplasm. It catalyses the reaction Release of an N-terminal pyroglutamyl group from a polypeptide, the second amino acid generally not being Pro.. Its function is as follows. Removes 5-oxoproline from various penultimate amino acid residues except L-proline. This chain is Pyrrolidone-carboxylate peptidase, found in Vibrio vulnificus (strain CMCP6).